A 184-amino-acid chain; its full sequence is Protein Syd (184 aa).

Belongs to the Syd family.

The protein resides in the cell inner membrane. Functionally, interacts with the SecY protein in vivo. May bind preferentially to an uncomplexed state of SecY, thus functioning either as a chelating agent for excess SecY in the cell or as a regulatory factor that negatively controls the translocase function. This Psychromonas ingrahamii (strain DSM 17664 / CCUG 51855 / 37) protein is Protein Syd.